A 148-amino-acid polypeptide reads, in one-letter code: Large ribosomal subunit protein bL19 (148 aa).

It belongs to the bacterial ribosomal protein bL19 family.

In terms of biological role, this protein is located at the 30S-50S ribosomal subunit interface and may play a role in the structure and function of the aminoacyl-tRNA binding site. This is Large ribosomal subunit protein bL19 from Beijerinckia indica subsp. indica (strain ATCC 9039 / DSM 1715 / NCIMB 8712).